Consider the following 293-residue polypeptide: Plant cysteine oxidase 1 (293 aa).

3 residues coordinate Fe cation: His-148, His-150, and His-211. Positions 250–293 are disordered; the sequence is SEDDDVLSSEEEKEGYAWLQERDDNPEDHTNVVGALYRGPKVED. Residues 251-262 show a composition bias toward acidic residues; it reads EDDDVLSSEEEK. A compositionally biased stretch (basic and acidic residues) spans 269–279; it reads QERDDNPEDHT.

This sequence belongs to the cysteine dioxygenase family. Fe(2+) serves as cofactor.

Its subcellular location is the nucleus. It is found in the cytoplasm. It carries out the reaction L-cysteine + O2 = 3-sulfino-L-alanine + H(+). Its function is as follows. Catalyzes the oxidation of N-terminal cysteine residues (N-Cys), thus preparing the protein for N-end rule pathway-mediated proteasomal degradation, upstream of the N-end rule enzymes ATE1, ATE2 and PRT6. Controls the preparation of the group VII ethylene response factor (ERF-VII) proteins for degradation via the 26S proteasome N-end rule pathway. Acts as an oxygen sensor that controls the stability of ERF-VII proteins, which are stabilized in flooding-induced hypoxia, and regulate transcriptional adaptation to these adverse conditions. Not active on Cys located inside or at the C-terminus of a peptide. Acts redundantly with PCO2 to repress the anaerobic response. The chain is Plant cysteine oxidase 1 from Arabidopsis thaliana (Mouse-ear cress).